The chain runs to 188 residues: dCTP deaminase (188 aa).

Residues lysine 111–arginine 116, threonine 135–glutamate 137, glutamine 156, tyrosine 170, and glutamine 180 each bind dCTP. The active-site Proton donor/acceptor is the glutamate 137.

The protein belongs to the dCTP deaminase family. As to quaternary structure, homotrimer.

It catalyses the reaction dCTP + H2O + H(+) = dUTP + NH4(+). The protein operates within pyrimidine metabolism; dUMP biosynthesis; dUMP from dCTP (dUTP route): step 1/2. In terms of biological role, catalyzes the deamination of dCTP to dUTP. The protein is dCTP deaminase of Cupriavidus taiwanensis (strain DSM 17343 / BCRC 17206 / CCUG 44338 / CIP 107171 / LMG 19424 / R1) (Ralstonia taiwanensis (strain LMG 19424)).